A 508-amino-acid polypeptide reads, in one-letter code: Photosystem II CP47 reaction center protein (508 aa).

The next 6 helical transmembrane spans lie at 21–36 (SVHI…WAGS), 101–115 (IVFS…IWHW), 140–156 (GIHL…FGAF), 203–218 (IAAG…FHLS), 237–252 (VLSS…AFVV), and 457–472 (SFAL…HGSR).

The protein belongs to the PsbB/PsbC family. PsbB subfamily. PSII is composed of 1 copy each of membrane proteins PsbA, PsbB, PsbC, PsbD, PsbE, PsbF, PsbH, PsbI, PsbJ, PsbK, PsbL, PsbM, PsbT, PsbX, PsbY, PsbZ, Psb30/Ycf12, at least 3 peripheral proteins of the oxygen-evolving complex and a large number of cofactors. It forms dimeric complexes. Requires Binds multiple chlorophylls. PSII binds additional chlorophylls, carotenoids and specific lipids. as cofactor.

It localises to the plastid. It is found in the chloroplast thylakoid membrane. One of the components of the core complex of photosystem II (PSII). It binds chlorophyll and helps catalyze the primary light-induced photochemical processes of PSII. PSII is a light-driven water:plastoquinone oxidoreductase, using light energy to abstract electrons from H(2)O, generating O(2) and a proton gradient subsequently used for ATP formation. In Lepidium virginicum (Virginia pepperweed), this protein is Photosystem II CP47 reaction center protein.